The sequence spans 673 residues: Acetate--CoA ligase [ADP-forming] II (673 aa).

The region spanning 9–45 (KALLEKYGIKTAKCIFCETEEQAVKAAKEIGFPVVMK) is the ATP-grasp domain. Residue 35–46 (AKEIGFPVVMKV) coordinates ATP.

It in the N-terminal section; belongs to the acetate CoA ligase beta subunit family. The protein in the C-terminal section; belongs to the acetate CoA ligase alpha subunit family. In terms of assembly, homodimer.

The enzyme catalyses acetate + ATP + CoA = acetyl-CoA + ADP + phosphate. Activity requires divalent metal cations. In terms of biological role, catalyzes the reversible conversion of a variety of acids to the corresponding acyl-CoA esters. Shows the highest activity with the aryl acids, indoleacetate and phenylacetate, as compared to acetate. In the reverse direction, phenylacetyl-CoA is the best substrate. Seems to be involved primarily in the degradation of aryl-CoA esters to the corresponding acids. Participates in the degradation of branched-chain amino acids via branched-chain-acyl-CoA esters. This is Acetate--CoA ligase [ADP-forming] II from Archaeoglobus fulgidus (strain ATCC 49558 / DSM 4304 / JCM 9628 / NBRC 100126 / VC-16).